Reading from the N-terminus, the 272-residue chain is GEM-like protein 5 (272 aa).

The segment at 1 to 42 is disordered; that stretch reads MTGSQEDQPKIIIDQEQPKTLETEHQPEPSSSSPDQKKWGTH. Basic and acidic residues predominate over residues 16-27; sequence EQPKTLETEHQP. A GRAM domain is found at 143 to 221; sequence SLFRQIFGTE…ANVATVNPVV (79 aa).

Belongs to the GEM family.

This chain is GEM-like protein 5, found in Arabidopsis thaliana (Mouse-ear cress).